The following is a 435-amino-acid chain: S-locus-specific glycoprotein BS29-2 (435 aa).

An N-terminal signal peptide occupies residues 1 to 30 (MKGVGKPYENSHTSFLLVFFVLTLFSPAFS). The Bulb-type lectin domain occupies 33-155 (TLSSIESLKI…NKNDRSGFLW (123 aa)). N-linked (GlcNAc...) asparagine glycosylation is found at Asn113, Asn120, Asn244, Asn260, and Asn389. A PAN domain is found at 350-430 (CSGDGFTRMK…NGQDLYVRLA (81 aa)). 2 cysteine pairs are disulfide-bonded: Cys380/Cys405 and Cys388/Cys390.

In terms of tissue distribution, stigma.

Its function is as follows. Involved in sporophytic self-incompatibility system (the inability of flowering plants to achieve self-fertilization). The sequence is that of S-locus-specific glycoprotein BS29-2 (SLSG) from Brassica oleracea var. alboglabra (Chinese kale).